Consider the following 417-residue polypeptide: FAD-dependent monooxygenase aptC (417 aa).

Residues 1-18 form the signal peptide; sequence MTLPVLIIGAGLSGLTTA. 5 residues coordinate FAD: E32, A43, R117, D332, and G345.

The protein belongs to the paxM FAD-dependent monooxygenase family. Requires FAD as cofactor.

The enzyme catalyses 3,6,8,9-tetrahydroxy-1-oxo-3-(2-oxopropyl)-1,2,3,4-tetrahydroanthracene-2-carboxyl-[ACP] + NADPH + O2 + H(+) = 2,3,6,8,9-pentahydroxy-1-oxo-3-(2-oxopropyl)-1,2,3,4-tetrahydroanthracene-2-carboxyl-[ACP] + NADP(+) + H2O. Its pathway is secondary metabolite biosynthesis. In terms of biological role, FAD-dependent monooxygenase; part of the gene cluster that mediates the biosynthesis of asperthecin, an anthraquinone pigment. Polyketide synthase (PKS) aptA catalyzes the formation of the aromatic polyketide from acetyl coenzyme A and seven malonyl coenzyme A molecules. Polyketide is subsequently hydrolyzed by the action of the hydrolase aptB into endocrocin-9-anthrone. Endocrocin-9-anthrone is then oxidized into endocrocin by the monooxygenase aptC. Endocrocin is likely to decarboxylate spontaneously to form emodin which explains why there is no decarboxylase in the asperthecin biosynthesis cluster. Finally, aptC or another endogenous oxygenase catalyzes additional oxidation steps to form asperthecin. This chain is FAD-dependent monooxygenase aptC, found in Emericella nidulans (strain FGSC A4 / ATCC 38163 / CBS 112.46 / NRRL 194 / M139) (Aspergillus nidulans).